The following is a 342-amino-acid chain: Oxygen-dependent coproporphyrinogen-III oxidase (342 aa).

Ser-98 serves as a coordination point for substrate. Residues His-102 and His-112 each contribute to the a divalent metal cation site. The Proton donor role is filled by His-112. 114-116 is a substrate binding site; it reads NYR. A divalent metal cation-binding residues include His-146 and His-176. Positions 266 to 301 are important for dimerization; it reads YVEFNLVWDRGTIFGLQTNGRTESILMSLPPLARWE.

Belongs to the aerobic coproporphyrinogen-III oxidase family. As to quaternary structure, homodimer. It depends on a divalent metal cation as a cofactor.

It localises to the cytoplasm. The enzyme catalyses coproporphyrinogen III + O2 + 2 H(+) = protoporphyrinogen IX + 2 CO2 + 2 H2O. Its pathway is porphyrin-containing compound metabolism; protoporphyrin-IX biosynthesis; protoporphyrinogen-IX from coproporphyrinogen-III (O2 route): step 1/1. Involved in the heme and chlorophyll biosynthesis. Catalyzes the aerobic oxidative decarboxylation of propionate groups of rings A and B of coproporphyrinogen-III to yield the vinyl groups in protoporphyrinogen-IX. This is Oxygen-dependent coproporphyrinogen-III oxidase from Prochlorococcus marinus (strain MIT 9515).